Reading from the N-terminus, the 649-residue chain is Leucine-rich repeat transmembrane protein FLRT3 (649 aa).

Residues methionine 1–alanine 28 form the signal peptide. The region spanning lysine 29–glutamate 58 is the LRRNT domain. Residues lysine 29–proline 528 lie on the Extracellular side of the membrane. 2 cysteine pairs are disulfide-bonded: cysteine 31–cysteine 37 and cysteine 35–cysteine 44. The segment at aspartate 38–asparagine 67 is interaction with ADGRL3. LRR repeat units follow at residues aspartate 59 to lysine 80, lysine 84 to lysine 104, tyrosine 105 to lysine 126, tyrosine 129 to phenylalanine 150, tyrosine 155 to arginine 175, threonine 176 to glycine 197, serine 200 to valine 220, asparagine 226 to threonine 247, asparagine 248 to tyrosine 269, and glutamine 272 to aspartate 293. N-linked (GlcNAc...) asparagine glycosylation occurs at asparagine 226. Residues asparagine 282 and asparagine 296 are each glycosylated (N-linked (GlcNAc...) asparagine). The 53-residue stretch at asparagine 305–aspartate 357 folds into the LRRCT domain. The cysteines at positions 309 and 334 are disulfide-linked. Positions lysine 387 to serine 407 are disordered. Residues proline 389–glutamine 401 are compositionally biased toward basic and acidic residues. The 96-residue stretch at lysine 409 to leucine 504 folds into the Fibronectin type-III domain. A helical transmembrane segment spans residues leucine 529–cysteine 549. At tryptophan 550–serine 649 the chain is on the cytoplasmic side. Residues leucine 622–serine 649 form a disordered region.

In terms of assembly, monomer and homodimer. Self-associates (via leucine-rich repeats), giving rise to homooligomers. Interacts with FGFR1. Interacts (via extracellular domain) with ADGRL1/LPHN1 and LPHN2 (via olfactomedin-like domain). Interacts (via extracellular domain) with ADGRL3 (via olfactomedin-like domain); the interaction is direct. Interacts (via extracellular domain) with UNC5B and UNC5D (via extracellular domain); the interaction is direct. Identified in complexes composed of FLRT3, ADGRL3 and UNC5B, respectively FLRT3, ADGRL3 and UNC5D. May also interact (via extracellular domain) with UNC5A and UNC5C. Interacts (via cytoplasmic domain) with ROBO1. In terms of processing, N-glycosylated. Proteolytic cleavage in the juxtamembrane region gives rise to a soluble ectodomain. Cleavage is probably effected by a metalloprotease. Expressed in kidney, brain, pancreas, skeletal muscle, lung, liver, placenta, and heart.

The protein resides in the cell membrane. Its subcellular location is the presynaptic cell membrane. It is found in the endoplasmic reticulum membrane. The protein localises to the cell junction. It localises to the focal adhesion. The protein resides in the secreted. Its subcellular location is the cell projection. It is found in the axon. The protein localises to the growth cone membrane. Functionally, functions in cell-cell adhesion, cell migration and axon guidance, exerting an attractive or repulsive role depending on its interaction partners. Plays a role in the spatial organization of brain neurons. Plays a role in vascular development in the retina. Plays a role in cell-cell adhesion via its interaction with ADGRL3 and probably also other latrophilins that are expressed at the surface of adjacent cells. Interaction with the intracellular domain of ROBO1 mediates axon attraction towards cells expressing NTN1. Mediates axon growth cone collapse and plays a repulsive role in neuron guidance via its interaction with UNC5B, and possibly also other UNC-5 family members. Promotes neurite outgrowth (in vitro). Mediates cell-cell contacts that promote an increase both in neurite number and in neurite length. Plays a role in the regulation of the density of glutamaergic synapses. Plays a role in fibroblast growth factor-mediated signaling cascades. Required for normal morphogenesis during embryonic development, but not for normal embryonic patterning. Required for normal ventral closure, headfold fusion and definitive endoderm migration during embryonic development. Required for the formation of a normal basement membrane and the maintenance of a normal anterior visceral endoderm during embryonic development. The chain is Leucine-rich repeat transmembrane protein FLRT3 (FLRT3) from Homo sapiens (Human).